Here is a 426-residue protein sequence, read N- to C-terminus: Serine--tRNA ligase (426 aa).

231–233 (TAE) is a binding site for L-serine. Residues 262–264 (RRE) and Val-278 each bind ATP. Glu-285 is an L-serine binding site. 349–352 (EVSS) contacts ATP. Ser-384 contributes to the L-serine binding site.

The protein belongs to the class-II aminoacyl-tRNA synthetase family. Type-1 seryl-tRNA synthetase subfamily. Homodimer. The tRNA molecule binds across the dimer.

The protein localises to the cytoplasm. It catalyses the reaction tRNA(Ser) + L-serine + ATP = L-seryl-tRNA(Ser) + AMP + diphosphate + H(+). The enzyme catalyses tRNA(Sec) + L-serine + ATP = L-seryl-tRNA(Sec) + AMP + diphosphate + H(+). Its pathway is aminoacyl-tRNA biosynthesis; selenocysteinyl-tRNA(Sec) biosynthesis; L-seryl-tRNA(Sec) from L-serine and tRNA(Sec): step 1/1. In terms of biological role, catalyzes the attachment of serine to tRNA(Ser). Is also able to aminoacylate tRNA(Sec) with serine, to form the misacylated tRNA L-seryl-tRNA(Sec), which will be further converted into selenocysteinyl-tRNA(Sec). In Chlamydia felis (strain Fe/C-56) (Chlamydophila felis), this protein is Serine--tRNA ligase.